The following is a 257-amino-acid chain: Snake venom serine protease KN2 (257 aa).

An N-terminal signal peptide occupies residues 1-18 (MVLIRVLANLLILQLSYA). A propeptide spanning residues 19–24 (QKSSEL) is cleaved from the precursor. The Peptidase S1 domain occupies 25–248 (VIGGHPCNIN…HLDWIKSIIA (224 aa)). 6 disulfide bridges follow: cysteine 31–cysteine 162, cysteine 49–cysteine 65, cysteine 97–cysteine 255, cysteine 141–cysteine 209, cysteine 173–cysteine 188, and cysteine 199–cysteine 224. Catalysis depends on charge relay system residues histidine 64 and aspartate 109. N-linked (GlcNAc...) asparagine glycans are attached at residues asparagine 120 and asparagine 121. Serine 203 functions as the Charge relay system in the catalytic mechanism.

The protein belongs to the peptidase S1 family. Snake venom subfamily. As to quaternary structure, monomer. As to expression, expressed by the venom gland.

Its subcellular location is the secreted. Its function is as follows. Snake venom serine protease that may act in the hemostasis system of the prey. This chain is Snake venom serine protease KN2, found in Trimeresurus stejnegeri (Chinese green tree viper).